A 347-amino-acid polypeptide reads, in one-letter code: Endothelin receptor type B (347 aa).

At 1 to 7 (EIKETFK) the chain is on the extracellular side. A helical transmembrane segment spans residues 8–32 (YINTVVSCLVFVLGIIGNSTLLRII). The Cytoplasmic segment spans residues 33 to 43 (YKNKCMRNGPN). A helical membrane pass occupies residues 44–69 (ILIASLALGDLLHIIIDIPISVYKLL). Residues 70-81 (AEDWPFGVEMCK) are Extracellular-facing. Cys-80 and Cys-161 are disulfide-bonded. A helical membrane pass occupies residues 82-103 (LVPFIQKASVGITVLSLCALSI). Residues 104-124 (DRYRAVASWSRIKGIGVPKWT) lie on the Cytoplasmic side of the membrane. A helical membrane pass occupies residues 125–149 (AVEIVLIWVISVVLAVPEAIAFDMI). The Extracellular segment spans residues 150–177 (TMEYRGKDLRICLLHPTQKTSFMMFYKQ). The helical transmembrane segment at 178 to 202 (AKDWWLFSFYFCLPLAITALFYTLM) threads the bilayer. The Cytoplasmic segment spans residues 203–230 (TCEMLRKKSGMQIALNDHLKQRREVAKT). Residues 231–256 (VFCLVLVFALCWLPLHLSRILKLTIY) traverse the membrane as a helical segment. The Extracellular segment spans residues 257-268 (DQKDPNRCELLS). Residues 269-295 (FFLVMDYIGINMASLNSCINPIALYLV) traverse the membrane as a helical segment. The Cytoplasmic portion of the chain corresponds to 296–347 (SKRFQNCFKSCLCCWCQSKDLLSLEERQSCLKFKANDHGYDNFRSSNKYSSS). S-palmitoyl cysteine attachment occurs at residues Cys-309 and Cys-311.

Belongs to the G-protein coupled receptor 1 family. Endothelin receptor subfamily. EDNRB sub-subfamily.

It localises to the cell membrane. Functionally, non-specific receptor for endothelin 1, 2, and 3. Mediates its action by association with G proteins that activate a phosphatidylinositol-calcium second messenger system. In Coturnix japonica (Japanese quail), this protein is Endothelin receptor type B (EDNRB).